Here is a 357-residue protein sequence, read N- to C-terminus: Large ribosomal subunit protein uL10 (357 aa).

Residues 311-357 (MVSRSAEAAERKEKEEEEEEEAEEEEAEEEEEEEEEEAAAGLGALFG) form a disordered region. The span at 325–348 (EEEEEEEAEEEEAEEEEEEEEEEA) shows a compositional bias: acidic residues.

It belongs to the universal ribosomal protein uL10 family. As to quaternary structure, part of the 50S ribosomal subunit. Forms part of the ribosomal stalk which helps the ribosome interact with GTP-bound translation factors. Forms a heptameric L10(L12)2(L12)2(L12)2 complex, where L10 forms an elongated spine to which the L12 dimers bind in a sequential fashion.

Functionally, forms part of the ribosomal stalk, playing a central role in the interaction of the ribosome with GTP-bound translation factors. The polypeptide is Large ribosomal subunit protein uL10 (Methanopyrus kandleri (strain AV19 / DSM 6324 / JCM 9639 / NBRC 100938)).